The chain runs to 130 residues: MAKPAKKTGPKKAKRNVPNGVAHIQSTFNNTIVSITDTSGEVISWSSAGASGFKGARKGTPFAAQTAAEAAARRALDQGMRQIEVLVKGPGSGRETAIRALQVAGLEITLIRDVTPLPHNGCRRPKRRRV.

It belongs to the universal ribosomal protein uS11 family. As to quaternary structure, part of the 30S ribosomal subunit. Interacts with proteins S7 and S18. Binds to IF-3.

Functionally, located on the platform of the 30S subunit, it bridges several disparate RNA helices of the 16S rRNA. Forms part of the Shine-Dalgarno cleft in the 70S ribosome. The protein is Small ribosomal subunit protein uS11 of Parasynechococcus marenigrum (strain WH8102).